The chain runs to 117 residues: Ribonuclease P protein component 4 (117 aa).

Zn(2+) is bound by residues cysteine 63, cysteine 66, cysteine 92, and cysteine 95.

It belongs to the eukaryotic/archaeal RNase P protein component 4 family. In terms of assembly, consists of a catalytic RNA component and at least 4 protein subunits. Forms a subcomplex with Rnp1 which stimulates the catalytic RNA. Requires Zn(2+) as cofactor.

It is found in the cytoplasm. The enzyme catalyses Endonucleolytic cleavage of RNA, removing 5'-extranucleotides from tRNA precursor.. In terms of biological role, part of ribonuclease P, a protein complex that generates mature tRNA molecules by cleaving their 5'-ends. The RNA is catalytic, but its KM for pre-tRNA is 170-fold decreased in the presence of the 4 known protein subunits (Rnp1-4). The protein subunits also decrease the amount of Mg(2+) needed for activity. The chain is Ribonuclease P protein component 4 from Pyrococcus furiosus (strain ATCC 43587 / DSM 3638 / JCM 8422 / Vc1).